We begin with the raw amino-acid sequence, 985 residues long: Phosphoenolpyruvate carboxylase (985 aa).

Residues 1-17 (MTQSAARRASSRATPAR) are compositionally biased toward low complexity. A disordered region spans residues 1–55 (MTQSAARRASSRATPARKTPPAPASQTPAPSPGGTAGTALGPTSRRSSGSAAAKD). Active-site residues include histidine 193 and lysine 634.

Belongs to the PEPCase type 1 family. Requires Mg(2+) as cofactor.

The enzyme catalyses oxaloacetate + phosphate = phosphoenolpyruvate + hydrogencarbonate. Forms oxaloacetate, a four-carbon dicarboxylic acid source for the tricarboxylic acid cycle. In Ralstonia nicotianae (strain ATCC BAA-1114 / GMI1000) (Ralstonia solanacearum), this protein is Phosphoenolpyruvate carboxylase.